Reading from the N-terminus, the 530-residue chain is Ubiquitin carboxyl-terminal hydrolase 17-like protein 24 (530 aa).

In terms of domain architecture, USP spans 80-375 (AGLQNMGNTC…QAYVLFYIQK (296 aa)). Cys-89 acts as the Nucleophile in catalysis. Residue His-334 is the Proton acceptor of the active site. 2 stretches are compositionally biased toward basic and acidic residues: residues 382–392 (SESVSRGREPR) and 398–412 (DTDR…KRDH). Disordered regions lie at residues 382 to 412 (SESV…KRDH) and 477 to 530 (NHHP…LVCQ). The span at 493 to 505 (TPTHQESMNTGTL) shows a compositional bias: polar residues. The span at 510–524 (GRARRSKGKNKHSKR) shows a compositional bias: basic residues.

It belongs to the peptidase C19 family. USP17 subfamily. As to expression, expressed in heart, brain, liver and skeletal muscle.

The protein resides in the nucleus. It is found in the nucleolus. It localises to the endoplasmic reticulum. The enzyme catalyses Thiol-dependent hydrolysis of ester, thioester, amide, peptide and isopeptide bonds formed by the C-terminal Gly of ubiquitin (a 76-residue protein attached to proteins as an intracellular targeting signal).. Functionally, deubiquitinating enzyme that removes conjugated ubiquitin from specific proteins to regulate different cellular processes that may include cell proliferation, progression through the cell cycle, apoptosis, cell migration, and the cellular response to viral infection. This Homo sapiens (Human) protein is Ubiquitin carboxyl-terminal hydrolase 17-like protein 24 (USP17L24).